Reading from the N-terminus, the 236-residue chain is MMWKLIIVTILAVGVLCDDIATAVNEQTTQQIRDTLKAQCKKNGAEDKAQDVENAAKNFVECVKGLFDFSTIKKEIEDAKPNGALDEVFGKYCAKSPQLKTCIHTLTTSATPCLEASVREQVGPINNGADQLIDFICYKDGDRIALFIAEGGPECFQEKSEGIRACAEKLKNNVGSVEAAQSLTLVEQCGKYDELTACIIKSLEECSTPTPGNMAESLFRFVRKGSPCNKAAPLKN.

The signal sequence occupies residues 1–17 (MMWKLIIVTILAVGVLC).

As to quaternary structure, monomer. In terms of tissue distribution, hemolymph.

It localises to the secreted. This chain is 27 kDa hemolymph protein, found in Galleria mellonella (Greater wax moth).